We begin with the raw amino-acid sequence, 563 residues long: Arginine--tRNA ligase (563 aa).

The short motif at 120–130 is the 'HIGH' region element; sequence PNIAKPFHIGH.

This sequence belongs to the class-I aminoacyl-tRNA synthetase family. In terms of assembly, monomer.

Its subcellular location is the cytoplasm. The catalysed reaction is tRNA(Arg) + L-arginine + ATP = L-arginyl-tRNA(Arg) + AMP + diphosphate. The sequence is that of Arginine--tRNA ligase from Clostridium botulinum (strain 657 / Type Ba4).